The chain runs to 308 residues: Membrane protein insertase YidC 1 (308 aa).

The N-terminal stretch at 1–22 (MKSIKRFALSAMGAAMLLVLTG) is a signal peptide. A lipid anchor (N-palmitoyl cysteine) is attached at C23. Residue C23 is the site of S-diacylglycerol cysteine attachment. Transmembrane regions (helical) follow at residues 60–80 (FGVA…PLGI), 135–155 (FGGV…AIYF), 168–188 (YLGI…GVLY), 211–225 (MIYM…FSLF), and 230–252 (VTLY…NYIV). The disordered stretch occupies residues 263–308 (ELAKNPSKASAFSTPSGRKDVTPEQPTAITSKKKHKNRNAGKQRSR). Positions 269 to 278 (SKASAFSTPS) are enriched in polar residues. Positions 293–308 (SKKKHKNRNAGKQRSR) are enriched in basic residues.

This sequence belongs to the OXA1/ALB3/YidC family. Type 2 subfamily.

It localises to the cell membrane. Its function is as follows. Required for the insertion and/or proper folding and/or complex formation of integral membrane proteins into the membrane. Involved in integration of membrane proteins that insert both dependently and independently of the Sec translocase complex, as well as at least some lipoproteins. The sequence is that of Membrane protein insertase YidC 1 from Streptococcus pneumoniae (strain ATCC BAA-255 / R6).